The chain runs to 116 residues: Classical arabinogalactan protein 25 (116 aa).

An N-terminal signal peptide occupies residues 1-28 (MAFSFLNKLLIIFIFIFISLSSSSPTIS). Residues 40–95 (LLPSPGDALPSDDGSGTIPSSPSPPDPDTNDGSYPDPLAFSPFASPPVSSPSPPPS) are disordered. 2 stretches are compositionally biased toward low complexity: residues 50–59 (SDDGSGTIPS) and 69–82 (NDGS…FSPF). Over residues 83-95 (ASPPVSSPSPPPS) the composition is skewed to pro residues. Ser-89 is lipidated: GPI-anchor amidated serine. Positions 90–116 (PSPPPSLPSAGVLLISLIISSASFLAL) are cleaved as a propeptide — removed in mature form.

The protein belongs to the classical AGP family. In terms of processing, O-glycosylated on the hydroxyproline residues.

Its subcellular location is the cell membrane. Its function is as follows. Proteoglycan that seems to be implicated in diverse developmental roles such as differentiation, cell-cell recognition, embryogenesis and programmed cell death. This chain is Classical arabinogalactan protein 25 (AGP25), found in Arabidopsis thaliana (Mouse-ear cress).